The primary structure comprises 271 residues: 5-deoxy-glucuronate isomerase (271 aa).

Belongs to the isomerase IolB family.

The catalysed reaction is 5-deoxy-D-glucuronate = 5-dehydro-2-deoxy-D-gluconate. It participates in polyol metabolism; myo-inositol degradation into acetyl-CoA; acetyl-CoA from myo-inositol: step 4/7. Its function is as follows. Involved in the isomerization of 5-deoxy-glucuronate (5DG) to 5-dehydro-2-deoxy-D-gluconate (DKG or 2-deoxy-5-keto-D-gluconate). This is 5-deoxy-glucuronate isomerase from Bacillus licheniformis (strain ATCC 14580 / DSM 13 / JCM 2505 / CCUG 7422 / NBRC 12200 / NCIMB 9375 / NCTC 10341 / NRRL NRS-1264 / Gibson 46).